The sequence spans 598 residues: NADH-quinone oxidoreductase subunit C/D (598 aa).

Positions 1–189 (MTDSTTHDRE…DPFELTRQKQ (189 aa)) are NADH dehydrogenase I subunit C. Residues 213-598 (DFMFLNLGPN…IDFVMSDVDR (386 aa)) form an NADH dehydrogenase I subunit D region.

It in the N-terminal section; belongs to the complex I 30 kDa subunit family. In the C-terminal section; belongs to the complex I 49 kDa subunit family. In terms of assembly, NDH-1 is composed of 13 different subunits. Subunits NuoB, CD, E, F, and G constitute the peripheral sector of the complex.

It localises to the cell inner membrane. The enzyme catalyses a quinone + NADH + 5 H(+)(in) = a quinol + NAD(+) + 4 H(+)(out). Functionally, NDH-1 shuttles electrons from NADH, via FMN and iron-sulfur (Fe-S) centers, to quinones in the respiratory chain. The immediate electron acceptor for the enzyme in this species is believed to be ubiquinone. Couples the redox reaction to proton translocation (for every two electrons transferred, four hydrogen ions are translocated across the cytoplasmic membrane), and thus conserves the redox energy in a proton gradient. This chain is NADH-quinone oxidoreductase subunit C/D, found in Edwardsiella ictaluri (strain 93-146).